A 315-amino-acid chain; its full sequence is Kiwa protein KwaB (315 aa).

Component of antiviral defense system Kiwa, composed of KwaA and KwaB. Expression of Kiwa in E.coli (strain MG1655) confers resistance to phages lambda and SECphi18. The chain is Kiwa protein KwaB from Escherichia coli O55:H7 (strain RM12579 / EPEC).